The sequence spans 202 residues: MSDTTKVLVLYYSMYGHIDTLAKEIAAGVAEVDGVEVALKRVPEHMSAELLSTIHARTDFDTPIASVDELADYDGILIGTPTRFGNMAGQMRNFLDQTGGLWAKGKLVGKAGGAFTSTATGGGAETTLLSVYTNFLHHGMVVVGVPYGTPEMFDTSEARAGGPYGAATLAGGDGSRQPSDKERTIARFQGRHFAGVAKKLKG.

Residues 7–193 (VLVLYYSMYG…TIARFQGRHF (187 aa)) enclose the Flavodoxin-like domain. FMN is bound by residues 13–18 (SMYGHI) and 82–84 (TRF). Residue tyrosine 15 coordinates NAD(+). Residue tryptophan 102 coordinates substrate. FMN contacts are provided by residues 117–122 (STATGG) and histidine 137.

It belongs to the WrbA family. Requires FMN as cofactor.

It carries out the reaction a quinone + NADH + H(+) = a quinol + NAD(+). The enzyme catalyses a quinone + NADPH + H(+) = a quinol + NADP(+). This chain is NAD(P)H dehydrogenase (quinone), found in Rhodospirillum rubrum (strain ATCC 11170 / ATH 1.1.1 / DSM 467 / LMG 4362 / NCIMB 8255 / S1).